The following is a 393-amino-acid chain: Arginine biosynthesis bifunctional protein ArgJ (393 aa).

Positions 143, 168, 179, 265, 388, and 393 each coordinate substrate. Residue Thr-179 is the Nucleophile of the active site.

This sequence belongs to the ArgJ family. As to quaternary structure, heterotetramer of two alpha and two beta chains.

The protein resides in the cytoplasm. The catalysed reaction is N(2)-acetyl-L-ornithine + L-glutamate = N-acetyl-L-glutamate + L-ornithine. The enzyme catalyses L-glutamate + acetyl-CoA = N-acetyl-L-glutamate + CoA + H(+). It participates in amino-acid biosynthesis; L-arginine biosynthesis; L-ornithine and N-acetyl-L-glutamate from L-glutamate and N(2)-acetyl-L-ornithine (cyclic): step 1/1. It functions in the pathway amino-acid biosynthesis; L-arginine biosynthesis; N(2)-acetyl-L-ornithine from L-glutamate: step 1/4. In terms of biological role, catalyzes two activities which are involved in the cyclic version of arginine biosynthesis: the synthesis of N-acetylglutamate from glutamate and acetyl-CoA as the acetyl donor, and of ornithine by transacetylation between N(2)-acetylornithine and glutamate. This Syntrophotalea carbinolica (strain DSM 2380 / NBRC 103641 / GraBd1) (Pelobacter carbinolicus) protein is Arginine biosynthesis bifunctional protein ArgJ.